The chain runs to 183 residues: Translation initiation factor IF-3 (183 aa).

Belongs to the IF-3 family. As to quaternary structure, monomer.

Its subcellular location is the cytoplasm. In terms of biological role, IF-3 binds to the 30S ribosomal subunit and shifts the equilibrium between 70S ribosomes and their 50S and 30S subunits in favor of the free subunits, thus enhancing the availability of 30S subunits on which protein synthesis initiation begins. The sequence is that of Translation initiation factor IF-3 from Pseudomonas entomophila (strain L48).